We begin with the raw amino-acid sequence, 278 residues long: Protoheme IX farnesyltransferase (278 aa).

The next 9 helical transmembrane spans lie at 12–32 (VIWLLILSSVVGYVYAAGTVD), 36–56 (LAALTAAATLAVGGSAAFNHY), 72–92 (PLPAGAIPPSNALVYSLALSA), 105–124 (LPGVFVALGWFFYAVVYTVW), 130–150 (WLNILGGGFAGNATFLGGYAL), 157–177 (LPAVLISFAIYLWIPSHIWAL), 204–224 (AIISALNIASAAYILWLYLVF), 228–248 (LPGLALVLAGVAGTVATSALA), and 257–277 (MWRMYKASSPILTLFLLALVF).

It belongs to the UbiA prenyltransferase family. Protoheme IX farnesyltransferase subfamily.

It is found in the cell membrane. It catalyses the reaction heme b + (2E,6E)-farnesyl diphosphate + H2O = Fe(II)-heme o + diphosphate. It participates in porphyrin-containing compound metabolism; heme O biosynthesis; heme O from protoheme: step 1/1. In terms of biological role, converts heme B (protoheme IX) to heme O by substitution of the vinyl group on carbon 2 of heme B porphyrin ring with a hydroxyethyl farnesyl side group. This chain is Protoheme IX farnesyltransferase, found in Pyrobaculum neutrophilum (strain DSM 2338 / JCM 9278 / NBRC 100436 / V24Sta) (Thermoproteus neutrophilus).